A 571-amino-acid polypeptide reads, in one-letter code: Gag-Pro polyprotein (571 aa).

Residue glycine 2 is the site of N-myristoyl glycine; by host attachment. A PPXY motif motif is present at residues 100–103 (PPPY). Repeats lie at residues 342–362 (PPPG…DCPT) and 367–387 (PPPG…DCPT). 2 CCHC-type zinc fingers span residues 345–362 (GPCY…DCPT) and 370–387 (GPCP…DCPT). One can recognise a Peptidase A2 domain in the interval 447–525 (ALMLVDTGAE…DKWQILGRDV (79 aa)). The Protease; shared with dimeric partner role is filled by aspartate 452.

As to quaternary structure, homodimer; the homodimers are part of the immature particles. Interacts with human TSG101 and NEDD4; these interactions are essential for budding and release of viral particles. Homodimer; further assembles as homohexamers. Post-translationally, specific enzymatic cleavages by the viral protease yield mature proteins. The polyprotein is cleaved during and after budding, this process is termed maturation. The protease is autoproteolytically processed at its N- and C-termini. In terms of processing, gag polyprotein: Myristoylated. Myristoylation of the matrix (MA) domain mediates the transport and binding of Gag polyproteins to the host plasma membrane and is required for the assembly of viral particles.

The protein localises to the virion. Its function is as follows. The matrix domain targets Gag, Gag-Pro and Gag-Pro-Pol polyproteins to the plasma membrane via a multipartite membrane binding signal, that includes its myristoylated N-terminus. Matrix protein. Functionally, forms the spherical core of the virus that encapsulates the genomic RNA-nucleocapsid complex. In terms of biological role, binds strongly to viral nucleic acids and promote their aggregation. Also destabilizes the nucleic acids duplexes via highly structured zinc-binding motifs. Its function is as follows. The aspartyl protease mediates proteolytic cleavages of Gag and Gag-Pol polyproteins during or shortly after the release of the virion from the plasma membrane. Cleavages take place as an ordered, step-wise cascade to yield mature proteins. This process is called maturation. Displays maximal activity during the budding process just prior to particle release from the cell. This chain is Gag-Pro polyprotein, found in Bos taurus (Bovine).